Reading from the N-terminus, the 387-residue chain is Killer cell lectin-like receptor subfamily G member 2 (387 aa).

Residues methionine 1–alanine 105 form a disordered region. Basic and acidic residues predominate over residues alanine 15–tryptophan 27. Residue serine 143 is modified to Phosphoserine. Residues glutamine 155–alanine 174 are disordered. A helical transmembrane segment spans residues tryptophan 241–alanine 261. The C-type lectin domain maps to serine 278 to alanine 383. 2 disulfides stabilise this stretch: cysteine 299–cysteine 382 and cysteine 361–cysteine 374.

The protein resides in the membrane. The protein is Killer cell lectin-like receptor subfamily G member 2 (Klrg2) of Mus musculus (Mouse).